An 88-amino-acid chain; its full sequence is Co-chaperonin GroES (88 aa).

This sequence belongs to the GroES chaperonin family. In terms of assembly, heptamer of 7 subunits arranged in a ring. Interacts with the chaperonin GroEL.

The protein localises to the cytoplasm. Functionally, together with the chaperonin GroEL, plays an essential role in assisting protein folding. The GroEL-GroES system forms a nano-cage that allows encapsulation of the non-native substrate proteins and provides a physical environment optimized to promote and accelerate protein folding. GroES binds to the apical surface of the GroEL ring, thereby capping the opening of the GroEL channel. This Treponema pallidum (strain Nichols) protein is Co-chaperonin GroES.